Here is a 384-residue protein sequence, read N- to C-terminus: S-adenosylmethionine synthase (384 aa).

Residue H15 coordinates ATP. D17 is a Mg(2+) binding site. K(+) is bound at residue E43. E56 and Q99 together coordinate L-methionine. Positions 99-109 (QSPDINQGVDR) are flexible loop. Residues 164-166 (DAK), 230-231 (RF), D239, 245-246 (RK), A262, and K266 each bind ATP. D239 lines the L-methionine pocket. L-methionine is bound at residue K270.

The protein belongs to the AdoMet synthase family. In terms of assembly, homotetramer; dimer of dimers. Mg(2+) is required as a cofactor. Requires K(+) as cofactor.

The protein resides in the cytoplasm. The catalysed reaction is L-methionine + ATP + H2O = S-adenosyl-L-methionine + phosphate + diphosphate. It participates in amino-acid biosynthesis; S-adenosyl-L-methionine biosynthesis; S-adenosyl-L-methionine from L-methionine: step 1/1. Functionally, catalyzes the formation of S-adenosylmethionine (AdoMet) from methionine and ATP. The overall synthetic reaction is composed of two sequential steps, AdoMet formation and the subsequent tripolyphosphate hydrolysis which occurs prior to release of AdoMet from the enzyme. This is S-adenosylmethionine synthase from Escherichia fergusonii (strain ATCC 35469 / DSM 13698 / CCUG 18766 / IAM 14443 / JCM 21226 / LMG 7866 / NBRC 102419 / NCTC 12128 / CDC 0568-73).